Here is a 43-residue protein sequence, read N- to C-terminus: Cytin chain A (43 aa).

This sequence belongs to the protease inhibitor I13 (potato type I serine protease inhibitor) family. Heterodimer of an A chain and a B chain, linked by a disulfide bond.

Inhibitor of chymotrypsin. This is Cytin chain A from Theromyzon tessulatum (Duck leech).